The chain runs to 517 residues: Beta-glucosidase 17 (517 aa).

Residues 1–23 (MAIKSIFIIIIISIITSISELYA) form the signal peptide. A beta-D-glucoside-binding positions include glutamine 54, histidine 158, and 203–204 (NE). The active-site Proton donor is glutamate 204. Cysteine 223 and cysteine 230 are oxidised to a cystine. Residue asparagine 229 is glycosylated (N-linked (GlcNAc...) asparagine). A beta-D-glucoside is bound at residue tyrosine 346. Asparagine 361 and asparagine 371 each carry an N-linked (GlcNAc...) asparagine glycan. A beta-D-glucoside contacts are provided by residues glutamate 417, tryptophan 466, 473 to 474 (EW), and tyrosine 482. Glutamate 417 functions as the Nucleophile in the catalytic mechanism. Asparagine 510 is a glycosylation site (N-linked (GlcNAc...) asparagine).

The protein belongs to the glycosyl hydrolase 1 family.

The enzyme catalyses Hydrolysis of terminal, non-reducing beta-D-glucosyl residues with release of beta-D-glucose.. This is Beta-glucosidase 17 from Arabidopsis thaliana (Mouse-ear cress).